Reading from the N-terminus, the 357-residue chain is MAKIMVAMSGGVDSSLTAVLLKEQGHDVTGVTMHLWEGDDNGIMESQCCSVEMTAGARRVCAQYDIPYYVFNYQKDFRKHVIDYFLREYSSGATPNPCLACNRDLKFRVLLERAELLGFDGLATGHFVQITGGGEQPYDLRRGIDINKDQSYVLYMLSQRELGRLHFPLGGFTKPQVRQMARERGLVTADKPESMDICFIPDNNYRRFLNEERPEIMQPGPIVNRHGTVLGQHKGLPQYTIGQRKGLGIAAGSPLFVIEIDTVRNLLIVGDADELERRDFVIDDVRSVYGQIEAGIYAVQIRAHGEAVPATITPREDGTLHIRYDQPQRSVTPGQAAVLYRDDRVFGGGRISTERYS.

Residues A7–S14 and M33 contribute to the ATP site. The active-site Nucleophile is C101. The cysteines at positions 101 and 198 are disulfide-linked. G125 is an ATP binding site. The interval K148–Q150 is interaction with tRNA. C198 acts as the Cysteine persulfide intermediate in catalysis.

It belongs to the MnmA/TRMU family.

The protein localises to the cytoplasm. It carries out the reaction S-sulfanyl-L-cysteinyl-[protein] + uridine(34) in tRNA + AH2 + ATP = 2-thiouridine(34) in tRNA + L-cysteinyl-[protein] + A + AMP + diphosphate + H(+). Functionally, catalyzes the 2-thiolation of uridine at the wobble position (U34) of tRNA, leading to the formation of s(2)U34. The protein is tRNA-specific 2-thiouridylase MnmA of Herpetosiphon aurantiacus (strain ATCC 23779 / DSM 785 / 114-95).